The primary structure comprises 51 residues: Ribosome biogenesis protein Nop10 (51 aa).

The protein belongs to the NOP10 family.

Involved in ribosome biogenesis; more specifically in 18S rRNA pseudouridylation and in cleavage of pre-rRNA. This Methanococcus aeolicus (strain ATCC BAA-1280 / DSM 17508 / OCM 812 / Nankai-3) protein is Ribosome biogenesis protein Nop10.